The following is a 2505-amino-acid chain: Fatty acid synthase (2505 aa).

Residue M1 is modified to N-acetylmethionine. The Ketosynthase family 3 (KS3) domain occupies 1–406 (MEEVVIAGMS…GANVHVILQP (406 aa)). The residue at position 59 (K59) is an N6-acetyllysine. S63 carries the post-translational modification Phosphoserine. The residue at position 70 (K70) is an N6-acetyllysine. C161 functions as the For beta-ketoacyl synthase activity in the catalytic mechanism. Position 207 is a phosphoserine (S207). H293 functions as the For beta-ketoacyl synthase activity in the catalytic mechanism. At K298 the chain carries N6-acetyllysine. H331 (for beta-ketoacyl synthase activity) is an active-site residue. Positions 429-817 (RTMEAVQGLL…IDINPNALFP (389 aa)) are acyl and malonyl transferases. K528 carries the N6-acetyllysine modification. The For malonyltransferase activity role is filled by S581. Residues 647–648 (DT) and F671 contribute to the an acyl-CoA site. The residue at position 673 (K673) is an N6-acetyllysine. The residue at position 725 (S725) is a Phosphoserine. Residue R773 coordinates an acyl-CoA. K790 is subject to N6-acetyllysine. Residues 844-966 (IPVAEDFPNG…KVYQWEDPDS (123 aa)) form an N-terminal hotdog fold region. Positions 844–1112 (IPVAEDFPNG…TSRRQQEQLV (269 aa)) constitute a PKS/mFAS DH domain. Residue H878 is the Proton acceptor; for dehydratase activity of the active site. Residues 983 to 1112 (VSRLTQGEVY…TSRRQQEQLV (130 aa)) are C-terminal hotdog fold. Position 993 is an N6-acetyllysine (K993). D1032 acts as the Proton donor; for dehydratase activity in catalysis. Residue K1276 is modified to N6-acetyllysine. C1464 is subject to S-nitrosocysteine. Residues S1578 and S1588 each carry the phosphoserine modification. The enoyl reductase stretch occupies residues 1629–1857 (DVPSSWTLEE…VQVREEEPEA (229 aa)). 1665–1682 (VLIHSGSGGVGQAAISIA) provides a ligand contact to NADP(+). K1698 bears the N6-(pyridoxal phosphate)lysine; alternate mark. K1698 carries the N6-acetyllysine; alternate modification. An N6-acetyllysine mark is found at K1765, K1841, and K1989. Residue 1765–1780 (KFDLSNNHPLGMAIFL) coordinates NADP(+). Residues 1858–2113 (MLPGAQPTLI…VLAEKKAVAH (256 aa)) form a beta-ketoacyl reductase region. The residue at position 2085 (C2085) is an S-nitrosocysteine. The Carrier domain occupies 2113–2193 (HGDGEAQRDL…EMSSKAGSDT (81 aa)). S2151 bears the O-(pantetheine 4'-phosphoryl)serine; alternate mark. S2151 carries the post-translational modification Phosphoserine; alternate. A phosphoserine mark is found at S2191 and S2230. The segment at 2202–2505 (NDTSLKQAQL…AEPRVSVREG (304 aa)) is thioesterase. The For thioesterase activity role is filled by S2302. At K2385 the chain carries N6-acetyllysine. Residue K2443 forms a Glycyl lysine isopeptide (Lys-Gly) (interchain with G-Cter in SUMO2) linkage. H2475 (for thioesterase activity) is an active-site residue.

In terms of assembly, homodimer which is arranged in a head to tail fashion. Interacts with CEACAM1; this interaction is insulin and phosphorylation-dependent; reduces fatty-acid synthase activity. In terms of processing, S-nitrosylation of Fatty acid synthase at cysteine residues Cys-1464 or Cys-2085 is important for the enzyme dimerization. In adipocytes, S-nitrosylation of Fatty acid synthase occurs under physiological conditions and gradually increases during adipogenesis.

Its subcellular location is the cytoplasm. It localises to the melanosome. It carries out the reaction acetyl-CoA + n malonyl-CoA + 2n NADPH + 2n H(+) = a long-chain fatty acid + (n+1) CoA + n CO2 + 2n NADP(+).. The enzyme catalyses holo-[ACP] + acetyl-CoA = acetyl-[ACP] + CoA. The catalysed reaction is holo-[ACP] + malonyl-CoA = malonyl-[ACP] + CoA. It catalyses the reaction a fatty acyl-[ACP] + malonyl-[ACP] + H(+) = a 3-oxoacyl-[ACP] + holo-[ACP] + CO2. It carries out the reaction a (3R)-hydroxyacyl-[ACP] + NADP(+) = a 3-oxoacyl-[ACP] + NADPH + H(+). The enzyme catalyses a (3R)-hydroxyacyl-[ACP] = a (2E)-enoyl-[ACP] + H2O. The catalysed reaction is a 2,3-saturated acyl-[ACP] + NADP(+) = a (2E)-enoyl-[ACP] + NADPH + H(+). It catalyses the reaction hexadecanoyl-[ACP] + H2O = hexadecanoate + holo-[ACP] + H(+). It carries out the reaction acetyl-[ACP] + malonyl-[ACP] + H(+) = 3-oxobutanoyl-[ACP] + holo-[ACP] + CO2. The enzyme catalyses 3-oxobutanoyl-[ACP] + NADPH + H(+) = (3R)-hydroxybutanoyl-[ACP] + NADP(+). The catalysed reaction is (3R)-hydroxybutanoyl-[ACP] = (2E)-butenoyl-[ACP] + H2O. It catalyses the reaction (2E)-butenoyl-[ACP] + NADPH + H(+) = butanoyl-[ACP] + NADP(+). It carries out the reaction butanoyl-[ACP] + malonyl-[ACP] + H(+) = 3-oxohexanoyl-[ACP] + holo-[ACP] + CO2. The enzyme catalyses 3-oxohexanoyl-[ACP] + NADPH + H(+) = (3R)-hydroxyhexanoyl-[ACP] + NADP(+). The catalysed reaction is (3R)-hydroxyhexanoyl-[ACP] = (2E)-hexenoyl-[ACP] + H2O. It catalyses the reaction (2E)-hexenoyl-[ACP] + NADPH + H(+) = hexanoyl-[ACP] + NADP(+). It carries out the reaction hexanoyl-[ACP] + malonyl-[ACP] + H(+) = 3-oxooctanoyl-[ACP] + holo-[ACP] + CO2. The enzyme catalyses 3-oxooctanoyl-[ACP] + NADPH + H(+) = (3R)-hydroxyoctanoyl-[ACP] + NADP(+). The catalysed reaction is (3R)-hydroxyoctanoyl-[ACP] = (2E)-octenoyl-[ACP] + H2O. It catalyses the reaction (2E)-octenoyl-[ACP] + NADPH + H(+) = octanoyl-[ACP] + NADP(+). It carries out the reaction octanoyl-[ACP] + malonyl-[ACP] + H(+) = 3-oxodecanoyl-[ACP] + holo-[ACP] + CO2. The enzyme catalyses 3-oxodecanoyl-[ACP] + NADPH + H(+) = (3R)-hydroxydecanoyl-[ACP] + NADP(+). The catalysed reaction is (3R)-hydroxydecanoyl-[ACP] = (2E)-decenoyl-[ACP] + H2O. It catalyses the reaction (2E)-decenoyl-[ACP] + NADPH + H(+) = decanoyl-[ACP] + NADP(+). It carries out the reaction decanoyl-[ACP] + malonyl-[ACP] + H(+) = 3-oxododecanoyl-[ACP] + holo-[ACP] + CO2. The enzyme catalyses 3-oxododecanoyl-[ACP] + NADPH + H(+) = (3R)-hydroxydodecanoyl-[ACP] + NADP(+). The catalysed reaction is (3R)-hydroxydodecanoyl-[ACP] = (2E)-dodecenoyl-[ACP] + H2O. It catalyses the reaction (2E)-dodecenoyl-[ACP] + NADPH + H(+) = dodecanoyl-[ACP] + NADP(+). It carries out the reaction dodecanoyl-[ACP] + malonyl-[ACP] + H(+) = 3-oxotetradecanoyl-[ACP] + holo-[ACP] + CO2. The enzyme catalyses 3-oxotetradecanoyl-[ACP] + NADPH + H(+) = (3R)-hydroxytetradecanoyl-[ACP] + NADP(+). The catalysed reaction is (3R)-hydroxytetradecanoyl-[ACP] = (2E)-tetradecenoyl-[ACP] + H2O. It catalyses the reaction (2E)-tetradecenoyl-[ACP] + NADPH + H(+) = tetradecanoyl-[ACP] + NADP(+). It carries out the reaction tetradecanoyl-[ACP] + malonyl-[ACP] + H(+) = 3-oxohexadecanoyl-[ACP] + holo-[ACP] + CO2. The enzyme catalyses 3-oxohexadecanoyl-[ACP] + NADPH + H(+) = (3R)-hydroxyhexadecanoyl-[ACP] + NADP(+). The catalysed reaction is (3R)-hydroxyhexadecanoyl-[ACP] = (2E)-hexadecenoyl-[ACP] + H2O. It catalyses the reaction (2E)-hexadecenoyl-[ACP] + NADPH + H(+) = hexadecanoyl-[ACP] + NADP(+). It carries out the reaction hexadecanoyl-[ACP] + malonyl-[ACP] + H(+) = 3-oxooctadecanoyl-[ACP] + holo-[ACP] + CO2. The enzyme catalyses 3-oxooctadecanoyl-[ACP] + NADPH + H(+) = (3R)-hydroxyoctadecanoyl-[ACP] + NADP(+). The catalysed reaction is (3R)-hydroxyoctadecanoyl-[ACP] = (2E)-octadecenoyl-[ACP] + H2O. It catalyses the reaction (2E)-octadecenoyl-[ACP] + NADPH + H(+) = octadecanoyl-[ACP] + NADP(+). It carries out the reaction tetradecanoyl-[ACP] + H2O = tetradecanoate + holo-[ACP] + H(+). The enzyme catalyses octadecanoyl-[ACP] + H2O = octadecanoate + holo-[ACP] + H(+). The protein operates within lipid metabolism; fatty acid biosynthesis. With respect to regulation, cerulenin, a potent non-competitive pharmacological inhibitor of FAS, binds covalently to the active site of the condensing enzyme region, inactivating a key enzyme step in fatty acid synthesis. Another inhibitor, though less efficient, is C75, a member of the alpha-methylene-gamma-butyrolactone chemical class, also proposed as an antitumour and anti-obesity agent. Functionally, fatty acid synthetase is a multifunctional enzyme that catalyzes the de novo biosynthesis of long-chain saturated fatty acids starting from acetyl-CoA and malonyl-CoA in the presence of NADPH. This multifunctional protein contains 7 catalytic activities and a site for the binding of the prosthetic group 4'-phosphopantetheine of the acyl carrier protein ([ACP]) domain. This is Fatty acid synthase (Fasn) from Rattus norvegicus (Rat).